The primary structure comprises 445 residues: Signal recognition particle 54 kDa protein (445 aa).

GTP contacts are provided by residues 106–113 (GLQGSGKT), 186–190 (DTAGR), and 244–247 (TKLD).

Belongs to the GTP-binding SRP family. SRP54 subfamily. Part of the signal recognition particle protein translocation system, which is composed of SRP and FtsY. Archaeal SRP consists of a 7S RNA molecule of 300 nucleotides and two protein subunits: SRP54 and SRP19.

Its subcellular location is the cytoplasm. It catalyses the reaction GTP + H2O = GDP + phosphate + H(+). Functionally, involved in targeting and insertion of nascent membrane proteins into the cytoplasmic membrane. Binds to the hydrophobic signal sequence of the ribosome-nascent chain (RNC) as it emerges from the ribosomes. The SRP-RNC complex is then targeted to the cytoplasmic membrane where it interacts with the SRP receptor FtsY. The chain is Signal recognition particle 54 kDa protein from Methanobrevibacter smithii (strain ATCC 35061 / DSM 861 / OCM 144 / PS).